Here is a 235-residue protein sequence, read N- to C-terminus: Small ribosomal subunit protein uS2 (235 aa).

Belongs to the universal ribosomal protein uS2 family.

This chain is Small ribosomal subunit protein uS2, found in Geobacillus sp. (strain WCH70).